Consider the following 248-residue polypeptide: Ribosomal RNA small subunit methyltransferase A (248 aa).

Residues histidine 11, leucine 13, glycine 38, glutamate 60, aspartate 83, and asparagine 101 each contribute to the S-adenosyl-L-methionine site.

This sequence belongs to the class I-like SAM-binding methyltransferase superfamily. rRNA adenine N(6)-methyltransferase family. RsmA subfamily.

Its subcellular location is the cytoplasm. The catalysed reaction is adenosine(1518)/adenosine(1519) in 16S rRNA + 4 S-adenosyl-L-methionine = N(6)-dimethyladenosine(1518)/N(6)-dimethyladenosine(1519) in 16S rRNA + 4 S-adenosyl-L-homocysteine + 4 H(+). Its function is as follows. Specifically dimethylates two adjacent adenosines (A1518 and A1519) in the loop of a conserved hairpin near the 3'-end of 16S rRNA in the 30S particle. May play a critical role in biogenesis of 30S subunits. The chain is Ribosomal RNA small subunit methyltransferase A from Aquifex aeolicus (strain VF5).